Here is a 144-residue protein sequence, read N- to C-terminus: Ribosome maturation factor RimP (144 aa).

This sequence belongs to the RimP family.

It localises to the cytoplasm. In terms of biological role, required for maturation of 30S ribosomal subunits. This is Ribosome maturation factor RimP from Methylobacillus flagellatus (strain ATCC 51484 / DSM 6875 / VKM B-1610 / KT).